The chain runs to 344 residues: HTH-type transcriptional regulator XC_2801 (344 aa).

The HTH lysR-type domain maps to 3 to 60 (HDLNDTLIFVKVVEQGSFIAAANSLGLPKTTVSRKVQELETRLGARLLHRTTRRIGLT). Residues 20 to 39 (FIAAANSLGLPKTTVSRKVQ) constitute a DNA-binding region (H-T-H motif).

It belongs to the LysR transcriptional regulatory family. In terms of assembly, interacts with the cyclic di-GMP effector XC_3703.

Activity is regulated by cyclic di-GMP. Cyclic di-GMP specifically binds to XC_3703, which inhibits the interaction of the XC_2801-XC_3703 complex with DNA and prevents the transcription of the target genes. Its function is as follows. Transcriptional regulator that directly or indirectly regulates the expression of virulence-related genes, including flhB, aaeA, fliL and flgG. Binds to the promoter of the target genes only in the presence of XC_3703. In Xanthomonas campestris pv. campestris (strain 8004), this protein is HTH-type transcriptional regulator XC_2801.